Here is a 2587-residue protein sequence, read N- to C-terminus: Clavatol synthase claF (2587 aa).

An N-terminal acylcarrier protein transacylase domain (SAT) region spans residues 93 to 256 (LLSPLVVIVQ…TEVALSGRFH (164 aa)). The active-site Nucleophile; for transacylase activity is C137. The Proton donor/acceptor; for transacylase activity role is filled by H256. The Ketosynthase family 3 (KS3) domain maps to 383–799 (DDQIAVIGMA…GSNASMIITQ (417 aa)). Residues C548, H683, and H722 each act as for beta-ketoacyl synthase activity in the active site. The segment at 912-1222 (CFGGQISTYV…ESLPLLAEAT (311 aa)) is malonyl-CoA:ACP transacylase (MAT) domain. An N-terminal hotdog fold region spans residues 1284-1416 (PKGLTTFIGF…GSIVFLPASD (133 aa)). The PKS/mFAS DH domain maps to 1284–1595 (PKGLTTFIGF…YRLVPMDSMR (312 aa)). The segment at 1315–1593 (LTSANVALNT…ISYRLVPMDS (279 aa)) is product template (PT) domain. Residues 1436 to 1595 (ASLLQGNGAD…YRLVPMDSMR (160 aa)) form a C-terminal hotdog fold region. A disordered region spans residues 1609 to 1635 (STAAVSSKSTPVHAPTPTTTVSSTPSS). Residues 1617–1635 (STPVHAPTPTTTVSSTPSS) are compositionally biased toward low complexity. In terms of domain architecture, Carrier spans 1654–1728 (PDISAKMCEI…SLVSCIRSTL (75 aa)). Residue S1688 is modified to O-(pantetheine 4'-phosphoryl)serine. Active-site for methyltransferase activity residues include Y1947, H2059, and E2085. The segment at 1952-2126 (VNTVWIKQLE…ATYWEKVLQS (175 aa)) is methyltransferase (CMeT) domain. The interval 2208 to 2452 (SLSSGQCVLV…KILPELDGTL (245 aa)) is NADPH-binding (R) domain.

Pantetheine 4'-phosphate serves as cofactor.

The catalysed reaction is 3 malonyl-CoA + acetyl-CoA + AH2 + 2 S-adenosyl-L-methionine + H(+) = clavatol + A + 2 S-adenosyl-L-homocysteine + 3 CO2 + 4 CoA + H2O. Its pathway is secondary metabolite biosynthesis. In terms of biological role, non-reducing polyketide synthase; part of the cla gene cluster that produces clavatol and ortho-quinone methide. The clavatol biosynthesis cluster cla and the terrestric acid cluster tra are both involved in the production of peniphenones and penilactones. The non-reducing PKS claF is responsible for the formation of clavatol from successive condensations of 3 malonyl-CoA units, presumably with a simple acetyl-CoA starter unit, and 2 methylation steps. The esterase claE probably collaborates with claF by catalyzing the hydrolysis of ACP-bound acyl intermediates to free the ACP from stalled intermediates. The clavatol oxidase claD then converts clavatol to hydroxyclavatol. Spontaneous dehydration of hydroxyclavatol leads to the accumulation of the highly active ortho-quinone methide. On the other hand, the PKS-NRPS hybrid traA is involved in the formation of crustosic acid, with the help of traB and traD. The polyketide synthase module (PKS) of traA is responsible for the synthesis of the polyketide backbone via the condensation of an acetyl-CoA starter unit with 3 malonyl-CoA units. The downstream nonribosomal peptide synthetase (NRPS) module then amidates the carboxyl end of the polyketide with L-malic acid. Because traA lacks a designated enoylreductase (ER) domain, the required activity is provided the enoyl reductase traG. Crustosic acid undergoes decarboxylation and isomerization to the terrestric acid, catalyzed by the 2-oxoglutarate-dependent dioxygenase traH. Both acids are further converted to the 2 gamma-butyrolactones (R)-5-methyltetronic acid and (S)-5-carboxylmethyltetronic acid, with involvement of the cytochrome P450 monooxygenase claJ. Spontaneous addition of the methide to these gamma-butyrolactones leads to peniphenone D and penilactone D, which undergo again stereospecific attacking by methide to give penilactones A and B. In Penicillium crustosum (Blue mold fungus), this protein is Clavatol synthase claF.